The chain runs to 815 residues: MGNSPSTQDPSHSTKKEHGHHFHDAFNKDRQGSITSQLFNNRKSTHKRRASHTSEHNGAIPPRMQLLASHDPSTDCDGRMSSDTTIDKGPSHLFKKDYSLSSAADVNDTTLANLTLSDDHDVGAPEEQVKSPSFLSPGPSMATVKRTKSDLDDLSTLNYTMVDETTENERNGKPHHERHRSSIIALKKNLLESSATASPSPTRSSSVHSASLPALTKTDSIDIPVRQPYSKKPSIHAYQYQYLNNDETFSENSQMDKEGNSDSVDAEAGVLQSEDMVLNQSLLQNALKKDMQRLSRVNSSNSMYTAERISHANNNGNIENNTRNKGNAGGSNDDFTAPISATAKMMMKLYGDKTLMERDLNKHHNKTKKAQSKKIRSASNSRRSSFASLHSLQSRKSILTNGLNLQPLHPLHPIINDNESQYSAPQHREISHHSNSMSSMSSISSTNSTENTLVVLKWKDDGTVAATTEVFIVSTDIASALKEQRELTLDENASLDSEKQLNPRIRMVYDDVHKEWFVPDLFLPAGIYRLQFSINGILTHSNFLPTATDSEGNFVNWFEVLPGYHTIEPFRNEADIDSQVEPTLDEELPKRPELKRFPSSSRKSSYYSAKGVERPSTPFSDYRGLSRSSSINMRDSFVRLKASSLDLMAEVKPERLVYSNEIPNLFNIGDGSTISVKGDSDDVHPQEPPSFTHRVVDCNQDDLFATLQQGGNIDAETAEAVFLSRYPVPDLPIYLNSSYLNRILNQSNQNSESHERDEGAINHIIPHVNLNHLLTSSIRDEIISVACTTRYEGKFITQVVYAPCYYKTQKSQISN.

The span at 1-11 (MGNSPSTQDPS) shows a compositional bias: polar residues. 2 disordered regions span residues 1–88 (MGNS…TIDK) and 120–146 (HDVG…TVKR). Gly2 is lipidated: N-myristoyl glycine. The segment covering 12–31 (HSTKKEHGHHFHDAFNKDRQ) has biased composition (basic and acidic residues). Residues 32–42 (GSITSQLFNNR) are compositionally biased toward polar residues. Ser33 is subject to Phosphoserine. 2 stretches are compositionally biased toward basic and acidic residues: residues 72 to 88 (PSTD…TIDK) and 120 to 129 (HDVGAPEEQV). Ser181, Ser198, Ser200, Ser206, Ser209, and Ser220 each carry phosphoserine. Disordered regions lie at residues 311–335 (HANN…NDDF), 363–389 (HHNK…FASL), and 410–444 (PLHP…SSIS). The span at 313 to 326 (NNNGNIENNTRNKG) shows a compositional bias: low complexity. At Ser331 the chain carries Phosphoserine. The span at 363–376 (HHNKTKKAQSKKIR) shows a compositional bias: basic residues. Low complexity-rich tracts occupy residues 377-389 (SASN…FASL) and 433-444 (HSNSMSSMSSIS). A kinase-interacting sequence (KIS); required for interaction with SNF1 region spans residues 473-716 (VSTDIASALK…LQQGGNIDAE (244 aa)). 2 positions are modified to phosphoserine: Ser494 and Ser497. The tract at residues 581 to 616 (EPTLDEELPKRPELKRFPSSSRKSSYYSAKGVERPS) is disordered. Residues 587 to 596 (ELPKRPELKR) are compositionally biased toward basic and acidic residues. The span at 599 to 608 (SSSRKSSYYS) shows a compositional bias: low complexity. A Phosphoserine modification is found at Ser643. Residues 724–804 (SRYPVPDLPI…FITQVVYAPC (81 aa)) are association with SNF1 kinase complex (ASC) domain; required for interaction with SNF4.

The protein belongs to the 5'-AMP-activated protein kinase beta subunit family. Component of the SNF1 kinase complex, a heterotrimeric complex composed of the catalytic alpha subunit SNF1, one of the three related beta subunits SIP1, SIP2 or GAL83, and the regulatory gamma subunit SNF4. The beta subunit serves as a bridge between the catalytic and the regulatory subunit. Interacts (via KIS domain) with SNF1. Interacts (via ASC domain) with SNF4. In terms of processing, phosphorylated by SNF1 in vitro.

The protein resides in the cytoplasm. The protein localises to the vacuole membrane. Its function is as follows. Beta subunit of the SNF1 kinase complex, which is required for transcriptional, metabolic, and developmental adaptations in response to glucose limitation. Has a structural role, mediating heterotrimer formation, and a regulatory role, defining carbon source-regulated subcellular location and substrate specificity of the SNF1 kinase complex. Promotes the PKA-regulated relocalization of the SNF1 kinase complex to the vacuolar membrane in response to various types of carbon stress. In Saccharomyces cerevisiae (strain RM11-1a) (Baker's yeast), this protein is SNF1 protein kinase subunit beta-1 (SIP1).